A 195-amino-acid polypeptide reads, in one-letter code: 3-isopropylmalate dehydratase small subunit (195 aa).

The protein belongs to the LeuD family. LeuD type 1 subfamily. As to quaternary structure, heterodimer of LeuC and LeuD.

The catalysed reaction is (2R,3S)-3-isopropylmalate = (2S)-2-isopropylmalate. The protein operates within amino-acid biosynthesis; L-leucine biosynthesis; L-leucine from 3-methyl-2-oxobutanoate: step 2/4. Its function is as follows. Catalyzes the isomerization between 2-isopropylmalate and 3-isopropylmalate, via the formation of 2-isopropylmaleate. This chain is 3-isopropylmalate dehydratase small subunit, found in Frankia alni (strain DSM 45986 / CECT 9034 / ACN14a).